Reading from the N-terminus, the 219-residue chain is Large ribosomal subunit protein uL1 (219 aa).

The protein belongs to the universal ribosomal protein uL1 family. Part of the 50S ribosomal subunit.

Binds directly to 23S rRNA. Probably involved in E site tRNA release. In terms of biological role, protein L1 is also a translational repressor protein, it controls the translation of its operon by binding to its mRNA. This Pyrococcus horikoshii (strain ATCC 700860 / DSM 12428 / JCM 9974 / NBRC 100139 / OT-3) protein is Large ribosomal subunit protein uL1.